Here is a 230-residue protein sequence, read N- to C-terminus: Ribose-5-phosphate isomerase A (230 aa).

Substrate is bound by residues 31-34, 87-90, and 100-103; these read TGST, DGAD, and KGGG. The active-site Proton acceptor is the glutamate 109. Lysine 127 is a binding site for substrate.

Belongs to the ribose 5-phosphate isomerase family. Homodimer.

The catalysed reaction is aldehydo-D-ribose 5-phosphate = D-ribulose 5-phosphate. It functions in the pathway carbohydrate degradation; pentose phosphate pathway; D-ribose 5-phosphate from D-ribulose 5-phosphate (non-oxidative stage): step 1/1. Catalyzes the reversible conversion of ribose-5-phosphate to ribulose 5-phosphate. This Lactobacillus delbrueckii subsp. bulgaricus (strain ATCC 11842 / DSM 20081 / BCRC 10696 / JCM 1002 / NBRC 13953 / NCIMB 11778 / NCTC 12712 / WDCM 00102 / Lb 14) protein is Ribose-5-phosphate isomerase A.